Consider the following 768-residue polypeptide: DNA replication licensing factor MCM3 homolog 2 (768 aa).

The MCM domain maps to 290–497; sequence TFDLLGNSLA…IDRQISEHVA (208 aa). 340–347 lines the ATP pocket; sequence GDPSVAKS. Residues 472 to 475 carry the Arginine finger motif; the sequence is SRFD. Residues 661-670 are compositionally biased toward basic and acidic residues; it reads EMKQQADHDA. The disordered stretch occupies residues 661–689; sequence EMKQQADHDAGATGGTVDGHGSSGNDPMD. The segment covering 672-682 has biased composition (gly residues); that stretch reads ATGGTVDGHGS.

It belongs to the MCM family.

Its subcellular location is the nucleus. The enzyme catalyses ATP + H2O = ADP + phosphate + H(+). Its function is as follows. Acts as a factor that allows the DNA to undergo a single round of replication per cell cycle. Required for DNA replication and cell proliferation. May act as a component of the MCM complex which is the putative replicative helicase of the replication licensing system in eukaryotic cells. In Zea mays (Maize), this protein is DNA replication licensing factor MCM3 homolog 2 (ROA2).